Consider the following 284-residue polypeptide: D-tagatose-1,6-bisphosphate aldolase subunit GatY (284 aa).

Asp82 serves as the catalytic Proton donor. 2 residues coordinate Zn(2+): His83 and His180. Gly181 lines the dihydroxyacetone phosphate pocket. Position 208 (His208) interacts with Zn(2+). Residues 209–211 (GAS) and 230–233 (NVAT) contribute to the dihydroxyacetone phosphate site.

Belongs to the class II fructose-bisphosphate aldolase family. TagBP aldolase GatY subfamily. As to quaternary structure, forms a complex with GatZ. The cofactor is Zn(2+).

The catalysed reaction is D-tagatofuranose 1,6-bisphosphate = D-glyceraldehyde 3-phosphate + dihydroxyacetone phosphate. It functions in the pathway carbohydrate metabolism; D-tagatose 6-phosphate degradation; D-glyceraldehyde 3-phosphate and glycerone phosphate from D-tagatose 6-phosphate: step 2/2. Catalytic subunit of the tagatose-1,6-bisphosphate aldolase GatYZ, which catalyzes the reversible aldol condensation of dihydroxyacetone phosphate (DHAP or glycerone-phosphate) with glyceraldehyde 3-phosphate (G3P) to produce tagatose 1,6-bisphosphate (TBP). Requires GatZ subunit for full activity and stability. Is involved in the catabolism of galactitol. In Salmonella enteritidis PT4 (strain P125109), this protein is D-tagatose-1,6-bisphosphate aldolase subunit GatY.